The chain runs to 219 residues: Thiamine-phosphate synthase (219 aa).

4-amino-2-methyl-5-(diphosphooxymethyl)pyrimidine contacts are provided by residues Q44–K48 and N79. D80 and D99 together coordinate Mg(2+). S117 is a 4-amino-2-methyl-5-(diphosphooxymethyl)pyrimidine binding site. T143–T145 serves as a coordination point for 2-[(2R,5Z)-2-carboxy-4-methylthiazol-5(2H)-ylidene]ethyl phosphate. Position 146 (K146) interacts with 4-amino-2-methyl-5-(diphosphooxymethyl)pyrimidine. 2-[(2R,5Z)-2-carboxy-4-methylthiazol-5(2H)-ylidene]ethyl phosphate contacts are provided by residues G175 and I195–S196.

It belongs to the thiamine-phosphate synthase family. Requires Mg(2+) as cofactor.

It carries out the reaction 2-[(2R,5Z)-2-carboxy-4-methylthiazol-5(2H)-ylidene]ethyl phosphate + 4-amino-2-methyl-5-(diphosphooxymethyl)pyrimidine + 2 H(+) = thiamine phosphate + CO2 + diphosphate. The catalysed reaction is 2-(2-carboxy-4-methylthiazol-5-yl)ethyl phosphate + 4-amino-2-methyl-5-(diphosphooxymethyl)pyrimidine + 2 H(+) = thiamine phosphate + CO2 + diphosphate. The enzyme catalyses 4-methyl-5-(2-phosphooxyethyl)-thiazole + 4-amino-2-methyl-5-(diphosphooxymethyl)pyrimidine + H(+) = thiamine phosphate + diphosphate. It participates in cofactor biosynthesis; thiamine diphosphate biosynthesis; thiamine phosphate from 4-amino-2-methyl-5-diphosphomethylpyrimidine and 4-methyl-5-(2-phosphoethyl)-thiazole: step 1/1. Functionally, condenses 4-methyl-5-(beta-hydroxyethyl)thiazole monophosphate (THZ-P) and 2-methyl-4-amino-5-hydroxymethyl pyrimidine pyrophosphate (HMP-PP) to form thiamine monophosphate (TMP). This Bacillus cereus (strain B4264) protein is Thiamine-phosphate synthase.